The chain runs to 498 residues: UDP-N-acetylmuramoyl-L-alanyl-D-glutamate--2,6-diaminopimelate ligase (498 aa).

Serine 29 lines the UDP-N-acetyl-alpha-D-muramoyl-L-alanyl-D-glutamate pocket. An ATP-binding site is contributed by 120-126 (GTDGKTS). UDP-N-acetyl-alpha-D-muramoyl-L-alanyl-D-glutamate contacts are provided by residues 162-163 (TT), serine 189, glutamine 195, and arginine 197. Position 229 is an N6-carboxylysine (lysine 229). Meso-2,6-diaminopimelate contacts are provided by residues arginine 392, 416 to 419 (DNPR), glycine 466, and glutamate 470. The Meso-diaminopimelate recognition motif motif lies at 416 to 419 (DNPR).

It belongs to the MurCDEF family. MurE subfamily. Mg(2+) serves as cofactor. Post-translationally, carboxylation is probably crucial for Mg(2+) binding and, consequently, for the gamma-phosphate positioning of ATP.

Its subcellular location is the cytoplasm. The catalysed reaction is UDP-N-acetyl-alpha-D-muramoyl-L-alanyl-D-glutamate + meso-2,6-diaminopimelate + ATP = UDP-N-acetyl-alpha-D-muramoyl-L-alanyl-gamma-D-glutamyl-meso-2,6-diaminopimelate + ADP + phosphate + H(+). It participates in cell wall biogenesis; peptidoglycan biosynthesis. Catalyzes the addition of meso-diaminopimelic acid to the nucleotide precursor UDP-N-acetylmuramoyl-L-alanyl-D-glutamate (UMAG) in the biosynthesis of bacterial cell-wall peptidoglycan. The polypeptide is UDP-N-acetylmuramoyl-L-alanyl-D-glutamate--2,6-diaminopimelate ligase (Alkalilimnicola ehrlichii (strain ATCC BAA-1101 / DSM 17681 / MLHE-1)).